Here is a 429-residue protein sequence, read N- to C-terminus: MYIEIIDVFAREVLDSRGNPTVEVEVMLEDGSIGRAIVPSGASTGKFEALELRDGDKKRYLGKGVLKAVENVNELIAPKLLGLNAYDQVYIDNVLLELDGTENKSKLGANAILGVSMAVARAAANSLQLPLYKYLGGVNAKVLPVPLMNVINGGAHADNNLDIQEFMIVPAGAPSFREALRYGAETFHALKKILKEAGHVTAVGDEGGFAPNLKNNEEAIQVLIQAIQSAGYEPGKDIFIALDVAASEFYNEETGKYFIDGSEKTVDELIEYYKSLIEKYPIISIEDPFDQEDWEAYQKFNKEVGNKVQIVGDDLYVTNVKRLQKGIELKASNSILIKLNQIGSVTETLNAIELAKTNNMTNVISHRSGETEDTFIADLAVATNAGLIKTGSLSRSERIAKYNQLLRIEEELGDVAQYRGLDAFYSIKR.

Gln-164 contacts (2R)-2-phosphoglycerate. Glu-206 acts as the Proton donor in catalysis. Mg(2+)-binding residues include Asp-243, Glu-286, and Asp-313. (2R)-2-phosphoglycerate-binding residues include Lys-338, Arg-367, Ser-368, and Lys-389. The active-site Proton acceptor is the Lys-338.

This sequence belongs to the enolase family. Mg(2+) is required as a cofactor.

Its subcellular location is the cytoplasm. It localises to the secreted. It is found in the cell surface. It catalyses the reaction (2R)-2-phosphoglycerate = phosphoenolpyruvate + H2O. It participates in carbohydrate degradation; glycolysis; pyruvate from D-glyceraldehyde 3-phosphate: step 4/5. Its function is as follows. Catalyzes the reversible conversion of 2-phosphoglycerate (2-PG) into phosphoenolpyruvate (PEP). It is essential for the degradation of carbohydrates via glycolysis. The sequence is that of Enolase from Thermosipho africanus (strain TCF52B).